An 894-amino-acid polypeptide reads, in one-letter code: Myb-like protein K (894 aa).

Residues L93–S139 are compositionally biased toward low complexity. 4 disordered regions span residues L93–S221, Q299–T353, Q492–I539, and A601–S659. Polar residues predominate over residues P140–Q149. Residues N150 to S221 show a composition bias toward low complexity. The span at V300–D309 shows a compositional bias: polar residues. Low complexity-rich tracts occupy residues M310–T353 and Q492–M527. Basic and acidic residues-rich tracts occupy residues G611 to D640 and A649 to S659. Residues A649–K704 enclose the HTH myb-type domain. A DNA-binding region (H-T-H motif) is located at residues Y677–L700. A disordered region spans residues Q703–S852. 3 stretches are compositionally biased toward low complexity: residues T710–I742, Q751–Q805, and P815–N845.

It is found in the nucleus. The chain is Myb-like protein K (mybK) from Dictyostelium discoideum (Social amoeba).